The primary structure comprises 420 residues: Glucose-1-phosphate adenylyltransferase (420 aa).

Alpha-D-glucose 1-phosphate contacts are provided by residues tyrosine 108, glycine 173, 188-189, and serine 206; that span reads EK.

This sequence belongs to the bacterial/plant glucose-1-phosphate adenylyltransferase family. As to quaternary structure, homotetramer.

The catalysed reaction is alpha-D-glucose 1-phosphate + ATP + H(+) = ADP-alpha-D-glucose + diphosphate. Its pathway is glycan biosynthesis; glycogen biosynthesis. Involved in the biosynthesis of ADP-glucose, a building block required for the elongation reactions to produce glycogen. Catalyzes the reaction between ATP and alpha-D-glucose 1-phosphate (G1P) to produce pyrophosphate and ADP-Glc. The polypeptide is Glucose-1-phosphate adenylyltransferase (Paraburkholderia phytofirmans (strain DSM 17436 / LMG 22146 / PsJN) (Burkholderia phytofirmans)).